The chain runs to 462 residues: MAKFRRRTCILLSLFILFIFSLMMGLKMLWPNAASFGPPFGLDLLPELHPLNAHSGNKADFQRSDRINMETNTKALKGAGMTVLPAKASEVNLEELPPLNYFLHAFYYSWYGNPQFDGKYIHWNHPVLEHWDPRIAKNYPQGQHSPPDDIGSSFYPELGSYSSRDPSVIETHMKQMRSASIGVLALSWYPPDSRDDNGEATDHLVPTILDKAHKYNLKVTFHIEPYSNRDDQNMHQNIKYIIDKYGNHPAFYRYKTRTGHSLPMFYVYDSYITKPTIWANLLTPSGSQSVRSSPYDGLFIALLVEEKHKNDILQSGFDGIYTYFATNGFTYGSSHQNWNNLKSFCEKNNLMFIPSVGPGYIDTSIRPWNTQNTRNRVNGKYYEVGLSAALQTHPSLISITSFNEWHEGTQIEKAVPKRTANTIYLDYRPHKPSLYLELTRKWSEKFSKERMTYALDQQQPAS.

The Cytoplasmic portion of the chain corresponds to 1–9 (MAKFRRRTC). A helical; Signal-anchor for type II membrane protein membrane pass occupies residues 10 to 30 (ILLSLFILFIFSLMMGLKMLW). The Lumenal portion of the chain corresponds to 31–462 (PNAASFGPPF…YALDQQQPAS (432 aa)). Residues 60–462 (DFQRSDRINM…YALDQQQPAS (403 aa)) form a catalytic region.

The protein belongs to the glycosyl hydrolase 99 family. Post-translationally, undergoes proteolytic cleavage in the C-terminal region.

Its subcellular location is the golgi apparatus membrane. The catalysed reaction is N-{alpha-Glc-(1-&gt;3)-alpha-Man-(1-&gt;2)-alpha-Man-(1-&gt;2)-alpha-Man-(1-&gt;3)-[alpha-Man-(1-&gt;2)-alpha-Man-(1-&gt;3)-[alpha-Man-(1-&gt;2)-alpha-Man-(1-&gt;6)]-alpha-Man-(1-&gt;6)]-beta-Man-(1-&gt;4)-beta-GlcNAc-(1-&gt;4)-beta-GlcNAc}-L-asparaginyl-[protein] + H2O = alpha-D-glucosyl-(1-&gt;3)-D-mannopyranose + N(4)-{alpha-D-Man-(1-&gt;2)-alpha-D-Man-(1-&gt;3)-[alpha-D-Man-(1-&gt;2)-alpha-D-Man-(1-&gt;3)-[alpha-D-Man-(1-&gt;2)-alpha-D-Man-(1-&gt;6)]-alpha-D-Man-(1-&gt;6)]-beta-D-Man-(1-&gt;4)-beta-D-GlaNAc-(1-&gt;4)-beta-D-GlcNAc}-L-asparaginyl-[protein] (N-glucan mannose isomer 8A1,2,3B1,2). This chain is Glycoprotein endo-alpha-1,2-mannosidase (Manea), found in Mus musculus (Mouse).